Reading from the N-terminus, the 259-residue chain is Small ribosomal subunit protein uS7m (259 aa).

Residues 1–39 constitute a mitochondrion transit peptide; that stretch reads MLRLIKQPLFRCASSGHLMKESLVFIHQTRTFQVGKFTS. Thr157 is modified (phosphothreonine).

The protein belongs to the universal ribosomal protein uS7 family. As to quaternary structure, component of the mitochondrial small ribosomal subunit (mt-SSU). Mature yeast 74S mitochondrial ribosomes consist of a small (37S) and a large (54S) subunit. The 37S small subunit contains a 15S ribosomal RNA (15S mt-rRNA) and at least 32 different proteins. The 54S large subunit contains a 21S rRNA (21S mt-rRNA) and at least 45 different proteins.

Its subcellular location is the mitochondrion. Component of the mitochondrial ribosome (mitoribosome), a dedicated translation machinery responsible for the synthesis of mitochondrial genome-encoded proteins, including at least some of the essential transmembrane subunits of the mitochondrial respiratory chain. The mitoribosomes are attached to the mitochondrial inner membrane and translation products are cotranslationally integrated into the membrane. The protein is Small ribosomal subunit protein uS7m (rsm7) of Schizosaccharomyces pombe (strain 972 / ATCC 24843) (Fission yeast).